Reading from the N-terminus, the 161-residue chain is ATP synthase subunit b 1 (161 aa).

A helical membrane pass occupies residues 5 to 25 (AETWVAVAFVLMVALFIYFGA).

It belongs to the ATPase B chain family. As to quaternary structure, F-type ATPases have 2 components, F(1) - the catalytic core - and F(0) - the membrane proton channel. F(1) has five subunits: alpha(3), beta(3), gamma(1), delta(1), epsilon(1). F(0) has three main subunits: a(1), b(2) and c(10-14). The alpha and beta chains form an alternating ring which encloses part of the gamma chain. F(1) is attached to F(0) by a central stalk formed by the gamma and epsilon chains, while a peripheral stalk is formed by the delta and b chains.

It is found in the cell inner membrane. Its function is as follows. F(1)F(0) ATP synthase produces ATP from ADP in the presence of a proton or sodium gradient. F-type ATPases consist of two structural domains, F(1) containing the extramembraneous catalytic core and F(0) containing the membrane proton channel, linked together by a central stalk and a peripheral stalk. During catalysis, ATP synthesis in the catalytic domain of F(1) is coupled via a rotary mechanism of the central stalk subunits to proton translocation. In terms of biological role, component of the F(0) channel, it forms part of the peripheral stalk, linking F(1) to F(0). The protein is ATP synthase subunit b 1 of Afipia carboxidovorans (strain ATCC 49405 / DSM 1227 / KCTC 32145 / OM5) (Oligotropha carboxidovorans).